The primary structure comprises 634 residues: Threonine--tRNA ligase (634 aa).

The region spanning 1–61 is the TGS domain; it reads MINITLPDGS…DHDASLRIIT (61 aa). Residues 243 to 534 form a catalytic region; sequence DHRRIGKAQD…LIEHHAGAFP (292 aa). Cys-334, His-385, and His-511 together coordinate Zn(2+).

It belongs to the class-II aminoacyl-tRNA synthetase family. In terms of assembly, homodimer. Zn(2+) is required as a cofactor.

The protein localises to the cytoplasm. The enzyme catalyses tRNA(Thr) + L-threonine + ATP = L-threonyl-tRNA(Thr) + AMP + diphosphate + H(+). Its function is as follows. Catalyzes the attachment of threonine to tRNA(Thr) in a two-step reaction: L-threonine is first activated by ATP to form Thr-AMP and then transferred to the acceptor end of tRNA(Thr). Also edits incorrectly charged L-seryl-tRNA(Thr). The sequence is that of Threonine--tRNA ligase from Xanthomonas axonopodis pv. citri (strain 306).